The sequence spans 429 residues: MARSKSQKIEGCSFCGRTRAEAEGKIISAKSVAICFECSKICHNLFKEESDKPASNKAPRGLPTPKQLKSHLDKYIIGQEDAKKVLSVAVYNHYKRIFKGSKRETGVELEKSNVLLVGPTGSGKTLLAKKLAAEMNVPFAIADATTLTEAGYVGEDVENILLKLIHAANGDVSFAERGIIYIDEIDKIAKKGENVSITRDVSGEGVQQSLLKIIEGTIANVPPRGGRKHPYEETIAINTHDILFICGGAFVGLENIIKKRINRSFIGFSSSSCKDTGGDNSLKYLEMEDLIKFGLIPEFVGRLPVHSYLDKLEKKDLMKILVEPENSIVRQYYHMFKMDNVDLLFEKDALDAIAEEAMLKNTGARGLRSILEELLKDVMFEIPSSKQIKKVIVTKDSVLNTNVEPLILTGRHVNKPWAKELYEINSKSN.

In terms of domain architecture, ClpX-type ZB spans 1 to 54 (MARSKSQKIEGCSFCGRTRAEAEGKIISAKSVAICFECSKICHNLFKEESDKPA). Zn(2+) contacts are provided by cysteine 12, cysteine 15, cysteine 35, and cysteine 38. 119 to 126 (PTGSGKTL) serves as a coordination point for ATP.

This sequence belongs to the ClpX chaperone family. Component of the ClpX-ClpP complex. Forms a hexameric ring that, in the presence of ATP, binds to fourteen ClpP subunits assembled into a disk-like structure with a central cavity, resembling the structure of eukaryotic proteasomes.

Its function is as follows. ATP-dependent specificity component of the Clp protease. It directs the protease to specific substrates. Can perform chaperone functions in the absence of ClpP. This chain is ATP-dependent Clp protease ATP-binding subunit ClpX, found in Borrelia duttonii (strain Ly).